Reading from the N-terminus, the 127-residue chain is Ribosome-binding factor A (127 aa).

This sequence belongs to the RbfA family. As to quaternary structure, monomer. Binds 30S ribosomal subunits, but not 50S ribosomal subunits or 70S ribosomes.

The protein localises to the cytoplasm. One of several proteins that assist in the late maturation steps of the functional core of the 30S ribosomal subunit. Associates with free 30S ribosomal subunits (but not with 30S subunits that are part of 70S ribosomes or polysomes). Required for efficient processing of 16S rRNA. May interact with the 5'-terminal helix region of 16S rRNA. The protein is Ribosome-binding factor A of Chloroflexus aggregans (strain MD-66 / DSM 9485).